The primary structure comprises 159 residues: Ribosomal RNA large subunit methyltransferase H (159 aa).

S-adenosyl-L-methionine is bound by residues Gly108 and 127-132 (FGPMTF).

Belongs to the RNA methyltransferase RlmH family. As to quaternary structure, homodimer.

It localises to the cytoplasm. The enzyme catalyses pseudouridine(1915) in 23S rRNA + S-adenosyl-L-methionine = N(3)-methylpseudouridine(1915) in 23S rRNA + S-adenosyl-L-homocysteine + H(+). Functionally, specifically methylates the pseudouridine at position 1915 (m3Psi1915) in 23S rRNA. This chain is Ribosomal RNA large subunit methyltransferase H, found in Magnetococcus marinus (strain ATCC BAA-1437 / JCM 17883 / MC-1).